The chain runs to 184 residues: Ribose 1,5-bisphosphate phosphokinase PhnN (184 aa).

11 to 18 is a binding site for ATP; the sequence is GPSGAGKD.

This sequence belongs to the ribose 1,5-bisphosphokinase family.

It carries out the reaction alpha-D-ribose 1,5-bisphosphate + ATP = 5-phospho-alpha-D-ribose 1-diphosphate + ADP. Its pathway is metabolic intermediate biosynthesis; 5-phospho-alpha-D-ribose 1-diphosphate biosynthesis; 5-phospho-alpha-D-ribose 1-diphosphate from D-ribose 5-phosphate (route II): step 3/3. Catalyzes the phosphorylation of ribose 1,5-bisphosphate to 5-phospho-D-ribosyl alpha-1-diphosphate (PRPP). This chain is Ribose 1,5-bisphosphate phosphokinase PhnN, found in Burkholderia mallei (strain SAVP1).